The sequence spans 1135 residues: Protocadherin-18 (1135 aa).

The first 27 residues, 1-27 (MHQMNAKMHFRFVFALLIVSFNHDVLG), serve as a signal peptide directing secretion. Cadherin domains are found at residues 28-137 (KNLK…SPQF), 138-246 (SRSL…SPAF), 247-354 (EQQS…KPEI), 361-465 (PGKE…PPHF), 466-576 (QRSR…VPVV), and 582-688 (RNNT…STAM). At 28–699 (KNLKYRIYEE…SVSQASLDVS (672 aa)) the chain is on the extracellular side. Asparagine 103 carries N-linked (GlcNAc...) asparagine glycosylation. N-linked (GlcNAc...) asparagine glycosylation is found at asparagine 269, asparagine 420, asparagine 559, asparagine 583, and asparagine 641. A helical membrane pass occupies residues 700 to 720 (MIIIISLGAICAVLLVIMVLF). Residues 721–1135 (ATRCNREKKD…NKLLQDVRQS (415 aa)) lie on the Cytoplasmic side of the membrane. Disordered regions lie at residues 769–800 (LPIR…NSHQ), 869–889 (SLKD…DLGR), 942–1003 (DYRS…STSS), and 1023–1046 (YSEC…PAKT). A compositionally biased stretch (polar residues) spans 791–800 (GSRQSHNSHQ). Over residues 869–878 (SLKDSGRGDS) the composition is skewed to basic and acidic residues. Residues 893 to 1135 (IDRLLGEGFS…NKLLQDVRQS (243 aa)) form an interaction with DAB1 region. A compositionally biased stretch (basic and acidic residues) spans 1028–1039 (EVDRSNSLERRK).

As to quaternary structure, interacts with DAB1. Expressed in all tissues, with highest expression in lung and ovary.

It is found in the cell membrane. Potential calcium-dependent cell-adhesion protein. This is Protocadherin-18 (PCDH18) from Homo sapiens (Human).